Consider the following 238-residue polypeptide: Glyceraldehyde 3-phosphate phosphatase (238 aa).

It belongs to the HAD-like hydrolase superfamily. Mg(2+) serves as cofactor.

Functionally, catalyzes the dephosphorylation of D,L-glyceraldehyde 3-phosphate in vitro. The polypeptide is Glyceraldehyde 3-phosphate phosphatase (Pyrococcus abyssi (strain GE5 / Orsay)).